The chain runs to 67 residues: Small ribosomal subunit protein eS31 (67 aa).

Positions 31, 34, 49, and 52 each coordinate Zn(2+). Residues 31 to 52 (CPKCGAGVFMAEHLNRFACGKC) form a C4-type zinc finger.

The protein belongs to the eukaryotic ribosomal protein eS31 family. As to quaternary structure, part of the 30S ribosomal subunit. Zn(2+) serves as cofactor.

This chain is Small ribosomal subunit protein eS31, found in Methanococcus maripaludis (strain DSM 14266 / JCM 13030 / NBRC 101832 / S2 / LL).